Consider the following 1383-residue polypeptide: DNA-directed RNA polymerase subunit beta (1383 aa).

The protein belongs to the RNA polymerase beta chain family. The RNAP catalytic core consists of 2 alpha, 1 beta, 1 beta' and 1 omega subunit. When a sigma factor is associated with the core the holoenzyme is formed, which can initiate transcription.

The enzyme catalyses RNA(n) + a ribonucleoside 5'-triphosphate = RNA(n+1) + diphosphate. Functionally, DNA-dependent RNA polymerase catalyzes the transcription of DNA into RNA using the four ribonucleoside triphosphates as substrates. The protein is DNA-directed RNA polymerase subunit beta of Bartonella henselae (strain ATCC 49882 / DSM 28221 / CCUG 30454 / Houston 1) (Rochalimaea henselae).